Reading from the N-terminus, the 549-residue chain is MTLASIRRGYHVIKTLLQYGLDDVLPPKMTPWYFTLARNSLFWIRNKHKDKSGGERLKLAMQELGPVYIKLGQMLSTRRDLLSDEWATELAMLQDKVPPFDGALARLAIEAELKAPIETFFDDFNETPLASASISQVHTATLKSNGKAVVLKVLRPNVETKIQADLLLMSQTAKVIDYLLGEGNRLRPAEVIEDYRVTILGELNLKLEALNAIKLRNNFIDSDALYIPYVYEEFCYPRLMVMERIYGIPVSDIVALKAQGTNFKLLAERGVELFFTQVFRDNFFHADMHPGNIFISRENPENPYYIGLDCGIMGTLSEVDKRYLAENFLAFFNRDYHRIAQLYIESGWVSEKTDLQAFEQAIKVVCEPMFNKPLDEISFGHVLLELFRTARHFDIVVQPQLVLLEKTLLYIEGLGRQLYPQLDLWQTAKPFLEQWMAEQVGPKAMFKKVSTKLPYWSDKLPEFPELIYDNLKLGRKLLSSQQQMLDKYLKYQQQAHKSNYLLITSAILLICGTLLFNQDATLLSPYVCLISGAVLWIIGWRSRPKNRKF.

Residues 123 to 501 (DFNETPLASA…QQQAHKSNYL (379 aa)) enclose the Protein kinase domain. ATP contacts are provided by residues 129 to 137 (LASASISQV) and Lys152. Asp287 (proton acceptor) is an active-site residue. A run of 2 helical transmembrane segments spans residues 498-518 (SNYLLITSAILLICGTLLFNQ) and 520-540 (ATLLSPYVCLISGAVLWIIGW).

The protein belongs to the ABC1 family. UbiB subfamily.

It localises to the cell inner membrane. The protein operates within cofactor biosynthesis; ubiquinone biosynthesis [regulation]. Functionally, is probably a protein kinase regulator of UbiI activity which is involved in aerobic coenzyme Q (ubiquinone) biosynthesis. The sequence is that of Probable protein kinase UbiB from Shewanella oneidensis (strain ATCC 700550 / JCM 31522 / CIP 106686 / LMG 19005 / NCIMB 14063 / MR-1).